The sequence spans 408 residues: MLRHLAGASALALTLAGAGFAQDHDHDHEDVTLYRVFVGDHEKGQVTAFDLAEPDHRWTFPTTGQVKLYSVAGGAVVAAVQSDADTVQFIRSGISFHDHGDHRDIEVGDPAAIDASLTGPRPFHLVEHDGKVVLNYDQGGYAEILDGHALAEGKAEPGRFPQARAHHGFVAPLGGNWLSTVASDEKVEGDASVPRLGLQAFDAEGNPAGNLATCTGIHGEAFSGAYLAAGCKEGVLTVKAGANGSEYKLLPYPADLPQGVTTGTLLGSTGIQVFLGNYGPDGLVVIDPVDEPHYRYIKLPFRRVDFALDPAKPSTGYVLTEDGSLHRIDLLKAEIVASAKVTEPYSMDGHWNDPRPRIAMAGDEIVVTDPNAGLVRRIATEDLSERGTVPVEGKPYNIAVTGGSGVTH.

The first 21 residues, 1-21, serve as a signal peptide directing secretion; the sequence is MLRHLAGASALALTLAGAGFA. Positions 23 to 29 match the N-terminal Zn(2+)-binding motif; binds a third Zn(2+) with low affinity motif; sequence DHDHDHE. Positions 99, 102, 104, 124, 167, 218, and 408 each coordinate Zn(2+). Cysteine 214 and cysteine 231 are joined by a disulfide.

As to quaternary structure, monomer.

It is found in the periplasm. Its function is as follows. Acts as a zinc chaperone in the AztABCD zinc transport system. Directly transfers one zinc cation to the solute binding protein AztC; the transfer occurs without the formation of a stable interaction. Binds 3 Zn(2+), two with high affinity and one with low affinity, and transfers only Zn(2+) bound to site 2 to AztC. Likely functions to store zinc in the periplasm and may be important for zinc accumulation in zinc-limited environments. The protein is Zinc chaperone AztD of Paracoccus denitrificans (strain Pd 1222).